The sequence spans 466 residues: Putative ABC transporter ATP-binding protein MG065 (466 aa).

The 231-residue stretch at 233–463 (IELKNVYKYI…NLNPKQVEEI (231 aa)) folds into the ABC transporter domain. Position 269-276 (269-276 (GPSGSGKT)) interacts with ATP.

Belongs to the ABC transporter superfamily.

This Mycoplasma genitalium (strain ATCC 33530 / DSM 19775 / NCTC 10195 / G37) (Mycoplasmoides genitalium) protein is Putative ABC transporter ATP-binding protein MG065.